We begin with the raw amino-acid sequence, 92 residues long: Small ribosomal subunit protein uS19 (92 aa).

This sequence belongs to the universal ribosomal protein uS19 family.

Its function is as follows. Protein S19 forms a complex with S13 that binds strongly to the 16S ribosomal RNA. This chain is Small ribosomal subunit protein uS19, found in Rhizobium etli (strain CIAT 652).